The sequence spans 240 residues: Ribonuclease HII (240 aa).

The region spanning 27–226 (GPVAGVDEAG…REARSLRLED (200 aa)) is the RNase H type-2 domain. A divalent metal cation contacts are provided by Asp-33, Glu-34, and Asp-127.

This sequence belongs to the RNase HII family. The cofactor is Mn(2+). Requires Mg(2+) as cofactor.

The protein resides in the cytoplasm. The enzyme catalyses Endonucleolytic cleavage to 5'-phosphomonoester.. Endonuclease that specifically degrades the RNA of RNA-DNA hybrids. This Frankia casuarinae (strain DSM 45818 / CECT 9043 / HFP020203 / CcI3) protein is Ribonuclease HII.